A 63-amino-acid polypeptide reads, in one-letter code: Large ribosomal subunit protein uL29 (63 aa).

The protein belongs to the universal ribosomal protein uL29 family.

The protein is Large ribosomal subunit protein uL29 of Vibrio parahaemolyticus serotype O3:K6 (strain RIMD 2210633).